Reading from the N-terminus, the 249-residue chain is ATP synthase subunit a (249 aa).

6 consecutive transmembrane segments (helical) span residues 26 to 46, 84 to 104, 114 to 134, 143 to 163, 185 to 205, and 208 to 228; these read FTNVSAFMVATVVLASGFLYL, FFPFVFSLFMFVLVANFIGLF, IIVTFALSLLVIGTVIFYGFF, LFVPSGVPGIIVPLVVLIEII, ITLKVFAGFVVSLSSLGALGI, and AVLPLLMTVAITALEFLVAFL.

Belongs to the ATPase A chain family. F-type ATPases have 2 components, CF(1) - the catalytic core - and CF(0) - the membrane proton channel. CF(1) has five subunits: alpha(3), beta(3), gamma(1), delta(1), epsilon(1). CF(0) has three main subunits: a(1), b(2) and c(9-12). The alpha and beta chains form an alternating ring which encloses part of the gamma chain. CF(1) is attached to CF(0) by a central stalk formed by the gamma and epsilon chains, while a peripheral stalk is formed by the delta and b chains.

It localises to the cell inner membrane. Key component of the proton channel; it plays a direct role in the translocation of protons across the membrane. This Brucella canis (strain ATCC 23365 / NCTC 10854 / RM-666) protein is ATP synthase subunit a.